A 348-amino-acid chain; its full sequence is Rhodopsin (348 aa).

Residue M1 is modified to N-acetylmethionine. Residues M1–Q36 are Extracellular-facing. 2 N-linked (GlcNAc...) asparagine glycosylation sites follow: N2 and N15. The helical transmembrane segment at F37–V61 threads the bilayer. Topologically, residues T62–N73 are cytoplasmic. The helical transmembrane segment at Y74–Y96 threads the bilayer. Residues T97–C110 lie on the Extracellular side of the membrane. A disulfide bridge connects residues C110 and C187. The helical transmembrane segment at N111 to I133 threads the bilayer. The 'Ionic lock' involved in activated form stabilization signature appears at E134 to Y136. At E134 to H152 the chain is on the cytoplasmic side. Residues A153–F173 form a helical membrane-spanning segment. Over G174–S202 the chain is Extracellular. E201 is a binding site for Zn(2+). Residues F203–G224 form a helical membrane-spanning segment. Residues Q225–R252 are Cytoplasmic-facing. The helical transmembrane segment at M253–Y274 threads the bilayer. Over I275 to I286 the chain is Extracellular. Zn(2+) is bound at residue Q279. A helical membrane pass occupies residues F287–M308. At K296 the chain carries N6-(retinylidene)lysine. At M309–A348 the chain is on the cytoplasmic side. S-palmitoyl cysteine attachment occurs at residues C322 and C323. The interval D330 to A348 is interaction with SAG. S334 is modified (phosphoserine). At T336 the chain carries Phosphothreonine. S338 carries the phosphoserine modification. Phosphothreonine occurs at positions 340 and 342. S343 carries the post-translational modification Phosphoserine.

The protein belongs to the G-protein coupled receptor 1 family. Opsin subfamily. As to quaternary structure, homodimer. May form a complex composed of RHO, GRK1 and RCVRN in a Ca(2+)-dependent manner; RCVRN prevents the interaction between GRK1 and RHO. Interacts with GRK1. Interacts (phosphorylated form) with SAG. Interacts with GNAT1. Interacts with GNAT3. SAG and G-proteins compete for a common binding site. Interacts with PRCD; the interaction promotes PRCD stability. Forms a complex with ASAP1 and ARF4. Forms a complex with ASAP1, RAB11A, Rabin8/RAB3IP, ARF4 and RAB11FIP3; the complex regulates Golgi-to-cilia rhodopsin/RHO transport in photoreceptors. Post-translationally, phosphorylated on some or all of the serine and threonine residues present in the C-terminal region. In terms of processing, contains one covalently linked retinal chromophore. Upon light absorption, the covalently bound 11-cis-retinal is converted to all-trans-retinal. After hydrolysis of the Schiff base and release of the covalently bound all-trans-retinal, active rhodopsin is regenerated by binding of a fresh molecule of 11-cis-retinal.

It localises to the membrane. It is found in the cell projection. The protein resides in the cilium. The protein localises to the photoreceptor outer segment. Its function is as follows. Photoreceptor required for image-forming vision at low light intensity. Required for photoreceptor cell viability after birth. Light-induced isomerization of 11-cis to all-trans retinal triggers a conformational change that activates signaling via G-proteins. Subsequent receptor phosphorylation mediates displacement of the bound G-protein alpha subunit by the arrestin SAG and terminates signaling. This chain is Rhodopsin (RHO), found in Macaca fascicularis (Crab-eating macaque).